The chain runs to 240 residues: Fibronectin type III domain-containing protein 5 (240 aa).

The span at 1–10 shows a compositional bias: gly residues; the sequence is MQAARGGAGR. The disordered stretch occupies residues 1–33; it reads MQAARGGAGRPGREGRGLERECERSPGPGVAMP. Residues 11–24 show a composition bias toward basic and acidic residues; that stretch reads PGREGRGLERECER. Residues 64-155 enclose the Fibronectin type-III domain; sequence APVNVTVRHL…EPVLFKTPRE (92 aa). N-linked (GlcNAc...) asparagine glycans are attached at residues N67 and N112. Residues 181–201 traverse the membrane as a helical segment; it reads GEVLIIVVVLFMWAGVIALFC. Residues 210-221 show a composition bias toward basic and acidic residues; that stretch reads NEPNNNKEKTKS. The interval 210–240 is disordered; that stretch reads NEPNNNKEKTKSASETSTPEHQGGGLLRSKI. Residues 231 to 240 are compositionally biased toward gly residues; sequence QGGGLLRSKI. The Microbody targeting signal motif lies at 238–240; it reads SKI.

As to quaternary structure, dimer; may exist in other oligomeric forms. In terms of processing, the extracellular domain is cleaved and released from the cell membrane. Post-translationally, N-Glycosylated. In terms of tissue distribution, in adult, it is highly expressed in skeletal muscle, heart and brain.

It localises to the cell membrane. Its subcellular location is the peroxisome membrane. The protein localises to the secreted. Functionally, mediates beneficial effects of muscular exercise. Induces browning of white adipose tissue by stimulating UCP1 expression, at least in part, via the nuclear receptor PPARA. The chain is Fibronectin type III domain-containing protein 5 (Fndc5) from Mus musculus (Mouse).